A 415-amino-acid polypeptide reads, in one-letter code: Histidine--tRNA ligase (415 aa).

The protein belongs to the class-II aminoacyl-tRNA synthetase family. In terms of assembly, homodimer.

Its subcellular location is the cytoplasm. It carries out the reaction tRNA(His) + L-histidine + ATP = L-histidyl-tRNA(His) + AMP + diphosphate + H(+). This is Histidine--tRNA ligase from Clostridium botulinum (strain Kyoto / Type A2).